Consider the following 229-residue polypeptide: Large ribosomal subunit protein uL1 (229 aa).

It belongs to the universal ribosomal protein uL1 family. As to quaternary structure, part of the 50S ribosomal subunit.

Its function is as follows. Binds directly to 23S rRNA. The L1 stalk is quite mobile in the ribosome, and is involved in E site tRNA release. Protein L1 is also a translational repressor protein, it controls the translation of the L11 operon by binding to its mRNA. The polypeptide is Large ribosomal subunit protein uL1 (Mycoplasmopsis pulmonis (strain UAB CTIP) (Mycoplasma pulmonis)).